The following is a 116-amino-acid chain: Nitrogenase iron-iron protein delta chain (116 aa).

Hexamer of two alpha, two beta, and two delta chains. Iron-sulfur cluster is required as a cofactor.

It carries out the reaction N2 + 8 reduced [2Fe-2S]-[ferredoxin] + 16 ATP + 16 H2O = H2 + 8 oxidized [2Fe-2S]-[ferredoxin] + 2 NH4(+) + 16 ADP + 16 phosphate + 6 H(+). In terms of biological role, the key enzymatic reactions in nitrogen fixation are catalyzed by the nitrogenase complex, which has 2 components: the iron protein (component 2) and a component 1 which is either a molybdenum-iron protein, a vanadium-iron, or an iron-iron protein. The sequence is that of Nitrogenase iron-iron protein delta chain (anfG) from Clostridium pasteurianum.